Reading from the N-terminus, the 269-residue chain is Hemin import ATP-binding protein HmuV (269 aa).

Positions 5-242 (IETHSVTMRI…GLIRKVFEVC (238 aa)) constitute an ABC transporter domain. Residue 37–44 (GPNGAGKS) coordinates ATP.

It belongs to the ABC transporter superfamily. Heme (hemin) importer (TC 3.A.1.14.5) family. In terms of assembly, the complex is composed of two ATP-binding proteins (HmuV), two transmembrane proteins (HmuU) and a solute-binding protein (HmuT).

The protein localises to the cell inner membrane. Functionally, part of the ABC transporter complex HmuTUV involved in hemin import. Responsible for energy coupling to the transport system. The polypeptide is Hemin import ATP-binding protein HmuV (Nitrobacter winogradskyi (strain ATCC 25391 / DSM 10237 / CIP 104748 / NCIMB 11846 / Nb-255)).